The following is a 63-amino-acid chain: AHIDCDKECNRRCSKASAHDRCLKYCGICCEKCNCVPPGTYGNEDSCPCYANLKNSKGGHKCP.

This sequence belongs to the GASA family. In terms of tissue distribution, expressed in pollen (at protein level).

This Cryptomeria japonica (Japanese cedar) protein is Cypmaclein.